We begin with the raw amino-acid sequence, 355 residues long: Small ribosomal subunit biogenesis GTPase RsgA 1 (355 aa).

Residues 103–262 enclose the CP-type G domain; that stretch reads GRVADRQAIA…LIDTPGVREF (160 aa). GTP contacts are provided by residues 152-155 and 204-212; these read NKAD and GSSGVGKSS. Cys-285, Cys-290, His-292, and Cys-298 together coordinate Zn(2+).

This sequence belongs to the TRAFAC class YlqF/YawG GTPase family. RsgA subfamily. As to quaternary structure, monomer. Associates with 30S ribosomal subunit, binds 16S rRNA. The cofactor is Zn(2+).

It is found in the cytoplasm. Its function is as follows. One of several proteins that assist in the late maturation steps of the functional core of the 30S ribosomal subunit. Helps release RbfA from mature subunits. May play a role in the assembly of ribosomal proteins into the subunit. Circularly permuted GTPase that catalyzes slow GTP hydrolysis, GTPase activity is stimulated by the 30S ribosomal subunit. The sequence is that of Small ribosomal subunit biogenesis GTPase RsgA 1 from Bacteroides thetaiotaomicron (strain ATCC 29148 / DSM 2079 / JCM 5827 / CCUG 10774 / NCTC 10582 / VPI-5482 / E50).